The sequence spans 131 residues: MVQSSEKIEVKYGEREIAEGTLITFPNPRPGRNYDIQITLPEYTCKCPFSGYPDFATIYLSYVPDQKVMELKAIKLYINSYRDRYISHEEAINQILDDLVAACEPLQMKVKGDFHPRGNVHTVVEVMYKKE.

Residue Cys-47 is the Thioimide intermediate of the active site. The active-site Proton donor is the Asp-54. Substrate-binding positions include 69-71 (MEL) and 88-89 (HE).

This sequence belongs to the GTP cyclohydrolase I family. QueF type 1 subfamily.

Its subcellular location is the cytoplasm. It carries out the reaction 7-aminomethyl-7-carbaguanine + 2 NADP(+) = 7-cyano-7-deazaguanine + 2 NADPH + 3 H(+). It functions in the pathway tRNA modification; tRNA-queuosine biosynthesis. Functionally, catalyzes the NADPH-dependent reduction of 7-cyano-7-deazaguanine (preQ0) to 7-aminomethyl-7-deazaguanine (preQ1). This chain is NADPH-dependent 7-cyano-7-deazaguanine reductase, found in Microcystis aeruginosa (strain NIES-843 / IAM M-2473).